We begin with the raw amino-acid sequence, 403 residues long: MNQRRAAGSTGVAYIRWLLRARPADYMLALSVAGGSLPVVGKHLKPLGGVTAIGVWGARHASDFLSATAKDLLTPGINEVRRRDRASTQEVSVAALRGIVSPDDLAVEWPAPERTPPVCGALRHRRYVHRRRVLYGDDPAQLLDVWRRKDMPTKPAPVLIFVPGGAWVHGSRAIQGYAVLSRLAAQGWVCLSIDYRVAPHHRWPRHILDVKTAIAWARANVDKFGGDRNFIAVAGCSAGGHLSALAGLTANDPQYQAELPEGSDTSVDAVVGIYGRYDWEDRSTPERARFVDFLERVVVQRTIDRHPEVFRDASPIQRVTRNAPPFLVIHGSRDCVIPVEQARSFVERLRAVSRSQVGYLELPGAGHGFDLLDGARTGPTAHAIALFLNQVHRSRAQFAKEVI.

Catalysis depends on residues Ser237, Asp334, and His367.

It belongs to the 'GDXG' lipolytic enzyme family.

It is found in the cell surface. The protein localises to the secreted. It localises to the cell wall. Its subcellular location is the capsule. It catalyses the reaction a fatty acid ester + H2O = an aliphatic alcohol + a fatty acid + H(+). The enzyme catalyses a butanoate ester + H2O = an aliphatic alcohol + butanoate + H(+). The catalysed reaction is a hexanoate ester + H2O = an aliphatic alcohol + hexanoate + H(+). It carries out the reaction an acetyl ester + H2O = an aliphatic alcohol + acetate + H(+). It catalyses the reaction an octanoate ester + H2O = an aliphatic alcohol + octanoate + H(+). The enzyme catalyses decanoate ester + H2O = decanoate + an aliphatic alcohol + H(+). Its function is as follows. Esterase that can hydrolyze short-chain esters with the carbon chain containing 2 to 10 carbon atoms. Does not have lipase activity. Is highly immunogenic and elicits strong humoral immune responses in both HIV-negative (HIV-) and HIV-positive (HIV+) tuberculosis (TB) patients. Also elicits pro-inflammatory cytokine and chemokine responses from macrophages and pulmonary epithelial cells. May participate in the progression of active tuberculosis both by contributing to the utilization of lipid substrates for bacterial growth and replication, and by modulating immune responses. The polypeptide is Esterase LipC (Mycobacterium tuberculosis (strain ATCC 25618 / H37Rv)).